Reading from the N-terminus, the 141-residue chain is Eukaryotic translation initiation factor 1A (141 aa).

Over residues 1 to 15 (MPKNKGKGGKNRRRG) the composition is skewed to basic residues. The disordered stretch occupies residues 1 to 28 (MPKNKGKGGKNRRRGKNENEQKRELQFK). Basic and acidic residues predominate over residues 16–28 (KNENEQKRELQFK). Residues 21–95 (QKRELQFKEE…DKADVILRYN (75 aa)) form the S1-like domain.

It belongs to the eIF-1A family.

Seems to be required for maximal rate of protein biosynthesis. Enhances ribosome dissociation into subunits and stabilizes the binding of the initiator Met-tRNA(I) to 40 S ribosomal subunits. The protein is Eukaryotic translation initiation factor 1A (eif1a) of Dictyostelium discoideum (Social amoeba).